The chain runs to 508 residues: UDP-N-acetylmuramoylalanine--D-glutamate ligase (508 aa).

ATP is bound at residue Gly-138–Thr-144.

The protein belongs to the MurCDEF family.

It localises to the cytoplasm. The catalysed reaction is UDP-N-acetyl-alpha-D-muramoyl-L-alanine + D-glutamate + ATP = UDP-N-acetyl-alpha-D-muramoyl-L-alanyl-D-glutamate + ADP + phosphate + H(+). The protein operates within cell wall biogenesis; peptidoglycan biosynthesis. Functionally, cell wall formation. Catalyzes the addition of glutamate to the nucleotide precursor UDP-N-acetylmuramoyl-L-alanine (UMA). The sequence is that of UDP-N-acetylmuramoylalanine--D-glutamate ligase from Bordetella avium (strain 197N).